The primary structure comprises 554 residues: Myo-inositol transporter 1 (554 aa).

Residues M1–T13 are compositionally biased toward polar residues. A disordered region spans residues M1–E57. N6 and N22 each carry an N-linked (GlcNAc...) asparagine glycan. Over residues S15 to S34 the composition is skewed to low complexity. Polar residues predominate over residues N44 to E57. The next 6 helical transmembrane spans lie at M65–G85, F110–A130, I144–A164, F167–L187, L196–W216, and V227–P247. N279 carries N-linked (GlcNAc...) asparagine glycosylation. Residues G313–G332 traverse the membrane as a helical segment. N351 carries N-linked (GlcNAc...) asparagine glycosylation. The next 5 membrane-spanning stretches (helical) occupy residues A354 to I374, I382 to H402, G420 to I440, I459 to F479, and G490 to L510.

Belongs to the major facilitator superfamily. Sugar transporter (TC 2.A.1.1) family.

The protein localises to the cell membrane. The catalysed reaction is myo-inositol(out) + H(+)(out) = myo-inositol(in) + H(+)(in). In terms of biological role, major transporter for myo-inositol. This chain is Myo-inositol transporter 1, found in Candida albicans (strain SC5314 / ATCC MYA-2876) (Yeast).